Reading from the N-terminus, the 273-residue chain is Formamidopyrimidine-DNA glycosylase (273 aa).

The active-site Schiff-base intermediate with DNA is the Pro-2. Catalysis depends on Glu-3, which acts as the Proton donor. Lys-58 (proton donor; for beta-elimination activity) is an active-site residue. His-92, Arg-111, and Arg-153 together coordinate DNA. The FPG-type zinc finger occupies 238–272 (RVYGREGQKCFNCSSTILKTKNSGRSTFYCKTCQY). Arg-262 acts as the Proton donor; for delta-elimination activity in catalysis.

Belongs to the FPG family. In terms of assembly, monomer. It depends on Zn(2+) as a cofactor.

The catalysed reaction is Hydrolysis of DNA containing ring-opened 7-methylguanine residues, releasing 2,6-diamino-4-hydroxy-5-(N-methyl)formamidopyrimidine.. It carries out the reaction 2'-deoxyribonucleotide-(2'-deoxyribose 5'-phosphate)-2'-deoxyribonucleotide-DNA = a 3'-end 2'-deoxyribonucleotide-(2,3-dehydro-2,3-deoxyribose 5'-phosphate)-DNA + a 5'-end 5'-phospho-2'-deoxyribonucleoside-DNA + H(+). In terms of biological role, involved in base excision repair of DNA damaged by oxidation or by mutagenic agents. Acts as a DNA glycosylase that recognizes and removes damaged bases. Has a preference for oxidized purines, such as 7,8-dihydro-8-oxoguanine (8-oxoG). Has AP (apurinic/apyrimidinic) lyase activity and introduces nicks in the DNA strand. Cleaves the DNA backbone by beta-delta elimination to generate a single-strand break at the site of the removed base with both 3'- and 5'-phosphates. The chain is Formamidopyrimidine-DNA glycosylase from Rickettsia canadensis (strain McKiel).